Here is a 225-residue protein sequence, read N- to C-terminus: PKHD-type hydroxylase HEAR3399 (225 aa).

In terms of domain architecture, Fe2OG dioxygenase spans 77–177 (RYMPPLFNRY…RVCSFFWLQS (101 aa)). Positions 95, 97, and 158 each coordinate Fe cation. Arg-168 lines the 2-oxoglutarate pocket.

The cofactor is Fe(2+). It depends on L-ascorbate as a cofactor.

This chain is PKHD-type hydroxylase HEAR3399, found in Herminiimonas arsenicoxydans.